The following is a 212-amino-acid chain: Large ribosomal subunit protein uL3 (212 aa).

Glutamine 152 bears the N5-methylglutamine mark.

Belongs to the universal ribosomal protein uL3 family. In terms of assembly, part of the 50S ribosomal subunit. Forms a cluster with proteins L14 and L19. Post-translationally, methylated by PrmB.

One of the primary rRNA binding proteins, it binds directly near the 3'-end of the 23S rRNA, where it nucleates assembly of the 50S subunit. The protein is Large ribosomal subunit protein uL3 of Chromohalobacter salexigens (strain ATCC BAA-138 / DSM 3043 / CIP 106854 / NCIMB 13768 / 1H11).